A 293-amino-acid chain; its full sequence is Glycine--tRNA ligase alpha subunit (293 aa).

The protein belongs to the class-II aminoacyl-tRNA synthetase family. Tetramer of two alpha and two beta subunits.

Its subcellular location is the cytoplasm. The catalysed reaction is tRNA(Gly) + glycine + ATP = glycyl-tRNA(Gly) + AMP + diphosphate. In Picosynechococcus sp. (strain ATCC 27264 / PCC 7002 / PR-6) (Agmenellum quadruplicatum), this protein is Glycine--tRNA ligase alpha subunit.